A 21-amino-acid chain; its full sequence is DCCHNTQLPFIYKTCPEGCNL.

The protein belongs to the three-finger toxin family. Short-chain subfamily. Orphan group XV sub-subfamily. Post-translationally, contains 4 disulfide bonds. In terms of tissue distribution, expressed by the venom gland.

It localises to the secreted. Its subcellular location is the target cell membrane. In terms of biological role, has hemolytic activity under low-lecithin conditions. Has low cytotoxic activity. Inhibits the expression of VEGF and bFGF in human non-small-cell lung cancer cell line NCI-H1299 in a dose-dependent manner. This is Cardiotoxin-like basic polypeptide ah from Naja atra (Chinese cobra).